Here is a 244-residue protein sequence, read N- to C-terminus: 3-oxoacyl-[acyl-carrier-protein] reductase FabG (244 aa).

Residues 12–15 and threonine 37 each bind NADP(+); that span reads GASR. Ca(2+) contacts are provided by glycine 50 and glycine 53. Residues 59-60 and asparagine 86 contribute to the NADP(+) site; that span reads NV. Residue serine 138 coordinates substrate. Asparagine 145 contributes to the Ca(2+) binding site. Tyrosine 151 serves as the catalytic Proton acceptor. NADP(+)-binding positions include 151–155 and isoleucine 184; that span reads YAAAK. Residues glutamate 233 and threonine 234 each coordinate Ca(2+).

Belongs to the short-chain dehydrogenases/reductases (SDR) family. As to quaternary structure, homotetramer.

It carries out the reaction a (3R)-hydroxyacyl-[ACP] + NADP(+) = a 3-oxoacyl-[ACP] + NADPH + H(+). The enzyme catalyses 3-oxobutanoyl-[ACP] + NADPH + H(+) = (3R)-hydroxybutanoyl-[ACP] + NADP(+). The catalysed reaction is 3-oxopentanoyl-[ACP] + NADPH + H(+) = (3R)-hydroxypentanoyl-[ACP] + NADP(+). It catalyses the reaction 3-oxohexanoyl-[ACP] + NADPH + H(+) = (3R)-hydroxyhexanoyl-[ACP] + NADP(+). It carries out the reaction 3-oxoheptanoyl-[ACP] + NADPH + H(+) = (3R)-hydroxyheptanoyl-[ACP] + NADP(+). The enzyme catalyses 3-oxooctanoyl-[ACP] + NADPH + H(+) = (3R)-hydroxyoctanoyl-[ACP] + NADP(+). The catalysed reaction is 3-oxononanoyl-[ACP] + NADPH + H(+) = (3R)-hydroxynonanoyl-[ACP] + NADP(+). It catalyses the reaction 3-oxodecanoyl-[ACP] + NADPH + H(+) = (3R)-hydroxydecanoyl-[ACP] + NADP(+). It carries out the reaction 3-oxohexadecanoyl-[ACP] + NADPH + H(+) = (3R)-hydroxyhexadecanoyl-[ACP] + NADP(+). The enzyme catalyses 3-oxo-(9Z)-hexadecenoyl-[ACP] + NADPH + H(+) = (3R)-hydroxy-(9Z)-hexadecenoyl-[ACP] + NADP(+). The catalysed reaction is 4-methyl-3-oxopentanoyl-[ACP] + NADPH + H(+) = (3R)-hydroxy-4-methylpentanoyl-[ACP] + NADP(+). It catalyses the reaction 5-methyl-3-oxohexanoyl-[ACP] + NADPH + H(+) = (3R)-hydroxy-5-methylhexanoyl-[ACP] + NADP(+). It carries out the reaction 4-methyl-3-oxohexanoyl-[ACP] + NADPH + H(+) = (3R)-hydroxy-4-methylhexanoyl-[ACP] + NADP(+). It functions in the pathway lipid metabolism; fatty acid biosynthesis. With respect to regulation, inhibited by cinnamic acid derivatives. Functionally, catalyzes the NADPH-dependent reduction of beta-ketoacyl-ACP substrates to beta-hydroxyacyl-ACP products, the first reductive step in the elongation cycle of fatty acid biosynthesis. In Escherichia coli (strain K12), this protein is 3-oxoacyl-[acyl-carrier-protein] reductase FabG (fabG).